The sequence spans 279 residues: Aldo-keto reductase Mvan_2161 (279 aa).

Catalysis depends on tyrosine 54, which acts as the Proton donor. Leucine 194, valine 196, isoleucine 232, arginine 234, serine 235, arginine 240, serine 243, asparagine 244, and arginine 270 together coordinate NADPH.

The protein belongs to the aldo/keto reductase family.

The sequence is that of Aldo-keto reductase Mvan_2161 from Mycolicibacterium vanbaalenii (strain DSM 7251 / JCM 13017 / BCRC 16820 / KCTC 9966 / NRRL B-24157 / PYR-1) (Mycobacterium vanbaalenii).